The sequence spans 88 residues: Apolipoprotein C-I (88 aa).

An N-terminal signal peptide occupies residues 1–26; it reads MRLLISLPVLIVVLAMALEGPAPAQA.

The protein belongs to the apolipoprotein C1 family.

The protein localises to the secreted. Its function is as follows. Inhibitor of lipoprotein binding to the low density lipoprotein (LDL) receptor, LDL receptor-related protein, and very low density lipoprotein (VLDL) receptor. Associates with high density lipoproteins (HDL) and the triacylglycerol-rich lipoproteins in the plasma and makes up about 10% of the protein of the VLDL and 2% of that of HDL. Appears to interfere directly with fatty acid uptake and is also the major plasma inhibitor of cholesteryl ester transfer protein (CETP). Modulates the interaction of APOE with beta-migrating VLDL and inhibits binding of beta-VLDL to the LDL receptor-related protein. Binds free fatty acids and reduces their intracellular esterification. The sequence is that of Apolipoprotein C-I (APOC1) from Mesocricetus auratus (Golden hamster).